A 301-amino-acid polypeptide reads, in one-letter code: Mitochondrial ornithine transporter 1 (301 aa).

The next 6 helical transmembrane spans lie at 5–25 (PAIQ…ACVL), 68–88 (SPAL…YGFC), 110–130 (AAAG…TELV), 168–188 (GFYH…FFFF), 207–227 (LGPI…WLAV), and 237–257 (IQVL…LSIV). 3 Solcar repeats span residues 7 to 91 (IQAA…CQQV), 104 to 197 (LSDL…SRSF), and 207 to 293 (LGPI…SRKL).

It belongs to the mitochondrial carrier (TC 2.A.29) family. Expressed in the liver (at protein level).

Its subcellular location is the mitochondrion inner membrane. The protein localises to the mitochondrion membrane. It catalyses the reaction L-citrulline(in) + L-ornithine(out) + H(+)(in) = L-citrulline(out) + L-ornithine(in) + H(+)(out). The catalysed reaction is L-ornithine(in) + L-arginine(out) = L-ornithine(out) + L-arginine(in). It carries out the reaction L-ornithine(out) + L-lysine(in) = L-ornithine(in) + L-lysine(out). The enzyme catalyses L-ornithine(out) + H(+)(in) = L-ornithine(in) + H(+)(out). It catalyses the reaction L-lysine(out) + H(+)(in) = L-lysine(in) + H(+)(out). With respect to regulation, inhibited by pyridoxal 5'-phosphate as well as by mercurials (mersalyl, p-chloromercuribenzene sulfonate, and mercuric chloride), N-ethylmaleimide and spermine. Mitochondrial ornithine-citrulline antiporter. Catalyzes the exchange between cytosolic ornithine and mitochondrial citrulline plus an H(+), the proton compensates the positive charge of ornithine thus leading to an electroneutral transport. Plays a crucial role in the urea cycle, by connecting the cytosolic and the intramitochondrial reactions of the urea cycle. Lysine and arginine are also transported by the antiport mechanism. In addition, catalyzes an electroneutral exchange of ornithine or lysine for H(+), a reaction driven by the pH gradient across the inner membrane. The sequence is that of Mitochondrial ornithine transporter 1 (Slc25a15) from Rattus norvegicus (Rat).